The chain runs to 336 residues: Fructose-1,6-bisphosphatase class 2 (336 aa).

Positions 33, 57, 85, and 88 each coordinate Mn(2+). Residues 88–90 (EGT), tyrosine 119, 164–166 (KPR), 186–188 (DGD), and glycine 210 each bind substrate. Glutamate 213 contacts Mn(2+).

The protein belongs to the FBPase class 2 family. Homodimer. It depends on Mn(2+) as a cofactor.

The protein resides in the cytoplasm. It catalyses the reaction beta-D-fructose 1,6-bisphosphate + H2O = beta-D-fructose 6-phosphate + phosphate. The protein operates within carbohydrate biosynthesis; gluconeogenesis. Its function is as follows. Catalyzes the hydrolysis of fructose 1,6-bisphosphate to fructose 6-phosphate. This is Fructose-1,6-bisphosphatase class 2 (glpX) from Shigella flexneri.